A 449-amino-acid polypeptide reads, in one-letter code: SUPPRESSOR OF GAMMA RESPONSE 1 (449 aa).

Positions 58 to 211 (LPRGVKFDPS…DYVVSKIFYQ (154 aa)) constitute an NAC domain. Residues 167 to 217 (RGCKKIMVLYGGKAVKTNWVMHQYHLGIEEDEKEGDYVVSKIFYQQPQQLV) mediate DNA binding. Residues 324–336 (DDKEEQEKDRDNE) show a composition bias toward basic and acidic residues. A disordered region spans residues 324-348 (DDKEEQEKDRDNENQGEEDPTWFDS).

In terms of processing, phosphorylated in a DNA stress-independent manner. Hyperphosphorylated on SQ motifs upon double-strand breaks, H(2)O(2) or zeocin treatments. Hyperphosphorylation is required for SOG1 function, and unlike constitutive phosphorylation, is ATM dependent. Expressed in shoot and root apical meristems, in lateral root primordia, in the vasculature of young leaves and in the root stele.

It is found in the nucleus. Its function is as follows. Transcription factor regulating the transcriptional activation response to gamma irradiation. Required for stem-cell death induced by UVB or by gamma irradiation. Not required for ATM activation, but participates in pathways governed by both ATM and ATR sensor kinases. Involved in DNA damage response (DDR) system that regulates cell cycle arrest. Functional homolog of animal p53. Regulates SMR5 and SMR7 transcription. Regulates DNA repair and cytokinin signaling separately and plays a key role in controlling lateral root formation under genotoxic stress. The chain is SUPPRESSOR OF GAMMA RESPONSE 1 from Arabidopsis thaliana (Mouse-ear cress).